The sequence spans 977 residues: MASAQAETNVGLASEQGPVAQRQRKGTGSGADSPKSNRSSPTQQEEKRIKSEDRTSPTGGAKDEDKESQGHAVAGGGGSSPVSSPQGRSSSVASPSSSSQQFCLRWNNYQTNLTTIFDQLLQNECFVDVTLACDGRSMKAHKMVLSACSPYFQTLLAETPCQHPIVIMRDVNWSDLKAIVEFMYRGEINVSQDQIGPLLRIAEMLKVRGLADVTHMEAATAAAAAASSERMPSSPKESTSTSRTEHDREREAEELLAFMQPEKKLRTSDWDPAELRLSPLERQQGRNVRKRRWPSADTIFNPPAPPSPLSSLIAAERMELEQKERERQRDCSLMTPPPKPPMSSGSTVGATRRLETAIHALDMPSPAATPGPLSRSSRPHSQSPQQQQAQQQGQLPLPLPLHPHHHASPAPHPSQTAGSAHHPASPAGDSRFPLGPAAAMAAARELSGLGPGPSAEPRLPPPPPHHHGGGGVGGGGVGGGGAGGVGSGGGSSLADDLEIKPGIAEMIREEERAKMMENSHAWMGATGSTLAADSYQYQLQSMWQKCWNTNQNLMHHMRFRERGPLKSWRPETMAEAIFSVLKEGLSLSQAARKYDIPYPTFVLYANRVHNMLGPSIDGGPDLRPKGRGRPQRILLGIWPDEHIKGVIKTVVFRDTKDIKDESLAAHMPPYGRHSPAFPLQDLPLSYPGASGALAGAPSSMACPNGSGPQTGVGVAGEQHMSQETAAAVAAVAHNIRQQMQMAAVPPGLFNLPPHPGVGGGVGNVPGAAGGRASISPALSSGSGPRHAPSPCGPAGLLPNLPPSMAVALHHQQQQQAAHHHMQQLHLQQQQAHLHHHQQQQQQQQQQHHQGGHQVAHKSGFGASSSSSASSSSMGQHHAPKAKSSPLRSETPRLHSPLGDLGLDMASYKREFSPSRLFAEDLAELVGASVSSSSSSAAAATAPPERSAGAASAATGADAPSSSSSGGIKVEPITTTSE.

Residues 1–97 form a disordered region; that stretch reads MASAQAETNV…RSSSVASPSS (97 aa). The segment covering 34-43 has biased composition (polar residues); sequence PKSNRSSPTQ. The span at 44–69 shows a compositional bias: basic and acidic residues; the sequence is QEEKRIKSEDRTSPTGGAKDEDKESQ. Residues 80-97 are compositionally biased toward low complexity; it reads SPVSSPQGRSSSVASPSS. Residues 127 to 192 enclose the BTB domain; that stretch reads VDVTLACDGR…MYRGEINVSQ (66 aa). Disordered stretches follow at residues 221 to 249, 281 to 348, 362 to 434, and 447 to 497; these read AAAA…HDRE, ERQQ…GSTV, DMPS…RFPL, and SGLG…ADDL. Basic and acidic residues predominate over residues 316–330; the sequence is ERMELEQKERERQRD. Residues 372-396 show a composition bias toward low complexity; that stretch reads PLSRSSRPHSQSPQQQQAQQQGQLP. A compositionally biased stretch (gly residues) spans 469-491; that stretch reads GGGVGGGGVGGGGAGGVGSGGGS. One can recognise an HTH psq-type domain in the interval 559–611; it reads FRERGPLKSWRPETMAEAIFSVLKEGLSLSQAARKYDIPYPTFVLYANRVHNM. The segment at residues 569–614 is a DNA-binding region (H-T-H motif); that stretch reads RPETMAEAIFSVLKEGLSLSQAARKYDIPYPTFVLYANRVHNMLGP. A DNA-binding region (a.T hook) is located at residues 621 to 632; that stretch reads DLRPKGRGRPQR. 2 disordered regions span residues 772 to 900 and 925 to 977; these read ASIS…LGDL and VGAS…TTSE. Composition is skewed to low complexity over residues 804-816, 838-853, 862-872, and 925-966; these read MAVA…QQQA, QQQQ…GGHQ, ASSSSSASSSS, and VGAS…SSGG.

As to expression, leg imaginal disk at the central region of the tarsus and in eye antenna disk at the basal cylinder.

It is found in the nucleus. In terms of biological role, probably acts as a transcriptional regulator. Required for the specification of the tarsal segment. Also involved in antenna development. The sequence is that of Protein bric-a-brac 1 (bab1) from Drosophila melanogaster (Fruit fly).